We begin with the raw amino-acid sequence, 433 residues long: Casein kinase 1-like protein 5 (433 aa).

The Protein kinase domain occupies Phe9–Ile278. ATP-binding positions include Ile15–Ile23 and Lys38. The Proton acceptor role is filled by Asp128. Residues Gln297–Leu433 form a disordered region. A compositionally biased stretch (basic and acidic residues) spans Leu342–Leu359. Residues Gly362–Arg375 are compositionally biased toward low complexity. Residue Ser390 is modified to Phosphoserine. Over residues Ile407 to Gly423 the composition is skewed to polar residues.

Belongs to the protein kinase superfamily. CK1 Ser/Thr protein kinase family. Casein kinase I subfamily. In terms of assembly, monomer. In terms of processing, autophosphorylated.

It localises to the cytoplasm. The enzyme catalyses L-seryl-[protein] + ATP = O-phospho-L-seryl-[protein] + ADP + H(+). It catalyses the reaction L-threonyl-[protein] + ATP = O-phospho-L-threonyl-[protein] + ADP + H(+). Casein kinases are operationally defined by their preferential utilization of acidic proteins such as caseins as substrates. It can phosphorylate a large number of proteins. The polypeptide is Casein kinase 1-like protein 5 (Arabidopsis thaliana (Mouse-ear cress)).